Here is a 144-residue protein sequence, read N- to C-terminus: Angiogenin-4 (144 aa).

The signal sequence occupies residues 1–24; the sequence is MTMSPCPLLLVFVLGLVVIPPTLA. His36 acts as the Proton acceptor in catalysis. 3 disulfide bridges follow: Cys49-Cys103, Cys62-Cys114, and Cys80-Cys129. Positions 54–58 match the Nucleolar localization signal motif; it reads KERKL. The active-site Proton donor is the His136.

It belongs to the pancreatic ribonuclease family. In terms of tissue distribution, detected in small intestine, caecum and colon, with the highest expression in Paneth cells in the intestinal epithelium.

The protein localises to the secreted. It localises to the cytoplasmic vesicle. Its subcellular location is the secretory vesicle lumen. The protein resides in the nucleus. It is found in the nucleolus. Has bactericidal activity against E.faecalis and L.monocytogenes, but not against L.innocua and E.coli. Promotes angiogenesis (in vitro). Has low ribonuclease activity (in vitro). Promotes proliferation of melanoma cells, but not of endothelial cells or fibroblasts (in vitro). This chain is Angiogenin-4 (Ang4), found in Mus musculus (Mouse).